The chain runs to 105 residues: UPF0235 protein A1C_06510 (105 aa).

The protein belongs to the UPF0235 family.

This is UPF0235 protein A1C_06510 from Rickettsia akari (strain Hartford).